A 240-amino-acid chain; its full sequence is Pyridoxine 5'-phosphate synthase (240 aa).

Asn-7 serves as a coordination point for 3-amino-2-oxopropyl phosphate. Asp-9–His-10 serves as a coordination point for 1-deoxy-D-xylulose 5-phosphate. A 3-amino-2-oxopropyl phosphate-binding site is contributed by Arg-18. His-43 serves as the catalytic Proton acceptor. Residues Arg-45 and His-50 each coordinate 1-deoxy-D-xylulose 5-phosphate. Residue Glu-70 is the Proton acceptor of the active site. Thr-100 lines the 1-deoxy-D-xylulose 5-phosphate pocket. His-191 serves as the catalytic Proton donor. Residues Gly-192 and Gly-213–His-214 contribute to the 3-amino-2-oxopropyl phosphate site.

This sequence belongs to the PNP synthase family. Homooctamer; tetramer of dimers.

It is found in the cytoplasm. The catalysed reaction is 3-amino-2-oxopropyl phosphate + 1-deoxy-D-xylulose 5-phosphate = pyridoxine 5'-phosphate + phosphate + 2 H2O + H(+). It functions in the pathway cofactor biosynthesis; pyridoxine 5'-phosphate biosynthesis; pyridoxine 5'-phosphate from D-erythrose 4-phosphate: step 5/5. Its function is as follows. Catalyzes the complicated ring closure reaction between the two acyclic compounds 1-deoxy-D-xylulose-5-phosphate (DXP) and 3-amino-2-oxopropyl phosphate (1-amino-acetone-3-phosphate or AAP) to form pyridoxine 5'-phosphate (PNP) and inorganic phosphate. In Coxiella burnetii (strain Dugway 5J108-111), this protein is Pyridoxine 5'-phosphate synthase.